Reading from the N-terminus, the 1045-residue chain is MANSRIYPQFFHTLVPSFHTHLMIPEDFFSEYIEGRSVAELKLDFSDKSWEVKLSDRRITDGWEEFVVANDFRIGDVVAFRYVGNLVFHVSNLGPNYYEIEHNDGESLLRKRLHQVDFSSNNGDVCDSEELPKEKKAKTNSEEADAVSSSSSADKSCFMAIITALDLTTDTLYLPLHFTSANGLTRKNREIILTDGGERSRVLDLRFDESSGTFYISRGWRNFCDENGQKAGGFFLFKLVGKGETLVLSFCPTESINGEENITREDSKDECSSLDSLMNIVEKKKYIPKPRGSPYSSYSPSHKQFVTFTLPPDYARIGKLSLSAPFVRENGINKPGEICLLDKHGRKWLTSLLLDSKGTMSLGKGWKEFVKANSLETGFTLKLIWEETTPVLSLCSPESNSDREQEEISKAIEKHSLFIDPSNRDKISNNDKEENMSWERKKDHLKSRDSTLSSQKQFVTITITPSSDRLVSLSNDSCLVVVSLLYFDMRLPKVFTRENGINKPGRITLLGKDGIKQQTNLLFDKANGAMSLGHGWKDFVKDNGLKTGDSFTLKLIWEDQTPVLSLCPADCSIDREAGGGRSETNQKKSLPIEPSTCKKIRKDVNIKDDNSKEKNDKEESKSVDGERKYLRGTYLTPSSQKHFVTLTITPSSIKKDRLILSPQFARKNNIDKPGMIYLLDTDGTKWLISLQRDKKGTMSLGKGWKEFAEANDFKLGESFTMELVWEDTTPMLSLLRTEFRSSKANEKESISSEHKTRESSPTIKNRIVTPALTPEDVKACKLILPSQFMKKIRTVDKERNHLKGRDLNPSCQKQFVTFTITPTCVGKNRLILSAQFARENNINQPGTIYLLDTDGRKWLTTVKRDKKGTMSLGKGWKEFADTKDLKSGDSFTMELIWEDTNPVLSLLRTKFSSSKSNKEESIFLEPKSRDSSSPTIVNRFVTLALTPEDVTACKLILPSQFMKANGINNKLGKITLLGENGVEWPGYMLSLDGTLALGNGWEGFCEANGVKLGQTFTLEFVNEQDTTTTPVLKFSSVETIYKNVN.

Residues 7–96 (YPQFFHTLVP…VFHVSNLGPN (90 aa)) constitute a DNA-binding region (TF-B3 1). Residues 121–147 (NNGDVCDSEELPKEKKAKTNSEEADAV) form a disordered region. Residues 130–141 (ELPKEKKAKTNS) are compositionally biased toward basic and acidic residues. 2 DNA-binding regions (TF-B3) span residues 157–253 (CFMA…FCPT) and 305–398 (FVTF…CSPE). A disordered region spans residues 423–449 (NRDKISNNDKEENMSWERKKDHLKSRD). The segment at residues 474-570 (SNDSCLVVVS…TPVLSLCPAD (97 aa)) is a DNA-binding region (TF-B3 4). Positions 606 to 625 (IKDDNSKEKNDKEESKSVDG) are disordered. 3 DNA-binding regions (TF-B3) span residues 643-738 (FVTL…LRTE), 815-910 (FVTF…LRTK), and 940-1035 (FVTL…LKFS).

It localises to the nucleus. The polypeptide is B3 domain-containing protein REM13 (REM13) (Arabidopsis thaliana (Mouse-ear cress)).